Consider the following 216-residue polypeptide: Protein GrpE (216 aa).

2 disordered regions span residues 1–45 (MTEE…LDPT) and 185–216 (RVAV…TEEV). Acidic residues predominate over residues 205 to 216 (TDDEESGGTEEV).

It belongs to the GrpE family. As to quaternary structure, homodimer.

Its subcellular location is the cytoplasm. Functionally, participates actively in the response to hyperosmotic and heat shock by preventing the aggregation of stress-denatured proteins, in association with DnaK and GrpE. It is the nucleotide exchange factor for DnaK and may function as a thermosensor. Unfolded proteins bind initially to DnaJ; upon interaction with the DnaJ-bound protein, DnaK hydrolyzes its bound ATP, resulting in the formation of a stable complex. GrpE releases ADP from DnaK; ATP binding to DnaK triggers the release of the substrate protein, thus completing the reaction cycle. Several rounds of ATP-dependent interactions between DnaJ, DnaK and GrpE are required for fully efficient folding. The polypeptide is Protein GrpE (Streptomyces griseus subsp. griseus (strain JCM 4626 / CBS 651.72 / NBRC 13350 / KCC S-0626 / ISP 5235)).